Here is a 237-residue protein sequence, read N- to C-terminus: 2,3-bisphosphoglycerate-dependent phosphoglycerate mutase (237 aa).

Residues 8 to 15 (RHGQSQWN), 21 to 22 (TG), arginine 60, 87 to 90 (ERHY), lysine 98, 114 to 115 (RR), and 180 to 181 (GN) each bind substrate. The active-site Tele-phosphohistidine intermediate is histidine 9. The active-site Proton donor/acceptor is glutamate 87.

Belongs to the phosphoglycerate mutase family. BPG-dependent PGAM subfamily. Homodimer.

The catalysed reaction is (2R)-2-phosphoglycerate = (2R)-3-phosphoglycerate. It functions in the pathway carbohydrate degradation; glycolysis; pyruvate from D-glyceraldehyde 3-phosphate: step 3/5. Its function is as follows. Catalyzes the interconversion of 2-phosphoglycerate and 3-phosphoglycerate. This chain is 2,3-bisphosphoglycerate-dependent phosphoglycerate mutase, found in Caulobacter vibrioides (strain ATCC 19089 / CIP 103742 / CB 15) (Caulobacter crescentus).